Here is a 211-residue protein sequence, read N- to C-terminus: ATP phosphoribosyltransferase (211 aa).

The protein belongs to the ATP phosphoribosyltransferase family. Short subfamily. Heteromultimer composed of HisG and HisZ subunits.

The protein localises to the cytoplasm. The catalysed reaction is 1-(5-phospho-beta-D-ribosyl)-ATP + diphosphate = 5-phospho-alpha-D-ribose 1-diphosphate + ATP. Its pathway is amino-acid biosynthesis; L-histidine biosynthesis; L-histidine from 5-phospho-alpha-D-ribose 1-diphosphate: step 1/9. Functionally, catalyzes the condensation of ATP and 5-phosphoribose 1-diphosphate to form N'-(5'-phosphoribosyl)-ATP (PR-ATP). Has a crucial role in the pathway because the rate of histidine biosynthesis seems to be controlled primarily by regulation of HisG enzymatic activity. The protein is ATP phosphoribosyltransferase (hisG) of Pseudomonas aeruginosa (strain ATCC 15692 / DSM 22644 / CIP 104116 / JCM 14847 / LMG 12228 / 1C / PRS 101 / PAO1).